A 56-amino-acid chain; its full sequence is Large ribosomal subunit protein bL33 (56 aa).

Over residues 1–12 the composition is skewed to basic and acidic residues; the sequence is MATKGGREKIKL. A disordered region spans residues 1 to 28; it reads MATKGGREKIKLESTAGTGHFYTTSKNK. Polar residues predominate over residues 15–25; that stretch reads TAGTGHFYTTS.

This sequence belongs to the bacterial ribosomal protein bL33 family.

This Albidiferax ferrireducens (strain ATCC BAA-621 / DSM 15236 / T118) (Rhodoferax ferrireducens) protein is Large ribosomal subunit protein bL33.